The sequence spans 426 residues: Serine--tRNA ligase (426 aa).

233-235 (TAE) serves as a coordination point for L-serine. Residue 264–266 (RSE) coordinates ATP. Glutamate 287 serves as a coordination point for L-serine. 351 to 354 (EISS) provides a ligand contact to ATP. Residue serine 387 coordinates L-serine.

Belongs to the class-II aminoacyl-tRNA synthetase family. Type-1 seryl-tRNA synthetase subfamily. As to quaternary structure, homodimer. The tRNA molecule binds across the dimer.

It is found in the cytoplasm. It catalyses the reaction tRNA(Ser) + L-serine + ATP = L-seryl-tRNA(Ser) + AMP + diphosphate + H(+). It carries out the reaction tRNA(Sec) + L-serine + ATP = L-seryl-tRNA(Sec) + AMP + diphosphate + H(+). The protein operates within aminoacyl-tRNA biosynthesis; selenocysteinyl-tRNA(Sec) biosynthesis; L-seryl-tRNA(Sec) from L-serine and tRNA(Sec): step 1/1. Functionally, catalyzes the attachment of serine to tRNA(Ser). Is also able to aminoacylate tRNA(Sec) with serine, to form the misacylated tRNA L-seryl-tRNA(Sec), which will be further converted into selenocysteinyl-tRNA(Sec). This chain is Serine--tRNA ligase, found in Pseudomonas aeruginosa (strain LESB58).